The following is a 187-amino-acid chain: Probable chorismate pyruvate-lyase (187 aa).

The substrate site is built by Arg80, Leu117, and Glu176.

It belongs to the UbiC family.

It localises to the cytoplasm. It catalyses the reaction chorismate = 4-hydroxybenzoate + pyruvate. It participates in cofactor biosynthesis; ubiquinone biosynthesis. Functionally, removes the pyruvyl group from chorismate, with concomitant aromatization of the ring, to provide 4-hydroxybenzoate (4HB) for the ubiquinone pathway. The protein is Probable chorismate pyruvate-lyase of Halorhodospira halophila (strain DSM 244 / SL1) (Ectothiorhodospira halophila (strain DSM 244 / SL1)).